Consider the following 114-residue polypeptide: Large ribosomal subunit protein uL22c (114 aa).

Belongs to the universal ribosomal protein uL22 family. Part of the 50S ribosomal subunit.

The protein resides in the plastid. Its subcellular location is the chloroplast. In terms of biological role, this protein binds specifically to 23S rRNA. Functionally, the globular domain of the protein is located near the polypeptide exit tunnel on the outside of the subunit, while an extended beta-hairpin is found that lines the wall of the exit tunnel in the center of the 70S ribosome. The sequence is that of Large ribosomal subunit protein uL22c (rpl22) from Gracilaria tenuistipitata (Red alga).